Consider the following 92-residue polypeptide: RNA-binding protein Hfq (92 aa).

The region spanning 9–68 is the Sm domain; it reads DPFLNALRRERVPVSVYLVNGIKLQGTIESFDQFVVLLRNTVSQMVYKHAISTVVPARNV.

It belongs to the Hfq family. As to quaternary structure, homohexamer.

Its function is as follows. RNA chaperone that binds small regulatory RNA (sRNAs) and mRNAs to facilitate mRNA translational regulation in response to envelope stress, environmental stress and changes in metabolite concentrations. Also binds with high specificity to tRNAs. This chain is RNA-binding protein Hfq, found in Xylella fastidiosa (strain M12).